The chain runs to 274 residues: Peroxiredoxin-4 (274 aa).

Residues 1-40 (MEAPPPPPPLPATTLAPGRSRKLLLLPLLLFLLRAEAVRG) form the signal peptide. The Thioredoxin domain occupies 82 to 240 (AKISKPAPYW…TLRLVQAFQY (159 aa)). C127 serves as the catalytic Cysteine sulfenic acid (-SOH) intermediate.

This sequence belongs to the peroxiredoxin family. AhpC/Prx1 subfamily. Homodimer; disulfide-linked, upon oxidation. 5 homodimers assemble to form a ring-like decamer. The enzyme can be inactivated by further oxidation of the cysteine sulfenic acid (C(P)-SOH) to sulphinic acid (C(P)-SO2H) and sulphonic acid (C(P)-SO3H) instead of its condensation to a disulfide bond.

The protein resides in the cytoplasm. Its subcellular location is the endoplasmic reticulum. The catalysed reaction is a hydroperoxide + [thioredoxin]-dithiol = an alcohol + [thioredoxin]-disulfide + H2O. Its function is as follows. Thiol-specific peroxidase that catalyzes the reduction of hydrogen peroxide and organic hydroperoxides to water and alcohols, respectively. Plays a role in cell protection against oxidative stress by detoxifying peroxides and as sensor of hydrogen peroxide-mediated signaling events. Regulates the activation of NF-kappa-B in the cytosol by a modulation of I-kappa-B-alpha phosphorylation. This is Peroxiredoxin-4 (PRDX4) from Bos taurus (Bovine).